The following is a 235-amino-acid chain: Deoxyribose-phosphate aldolase (235 aa).

Catalysis depends on Asp107, which acts as the Proton donor/acceptor. Lys167 (schiff-base intermediate with acetaldehyde) is an active-site residue. Lys197 serves as the catalytic Proton donor/acceptor.

Belongs to the DeoC/FbaB aldolase family. DeoC type 1 subfamily. Homotetramer.

It is found in the cytoplasm. The catalysed reaction is 2-deoxy-D-ribose 5-phosphate = D-glyceraldehyde 3-phosphate + acetaldehyde. It functions in the pathway carbohydrate degradation; 2-deoxy-D-ribose 1-phosphate degradation; D-glyceraldehyde 3-phosphate and acetaldehyde from 2-deoxy-alpha-D-ribose 1-phosphate: step 2/2. Its function is as follows. Catalyzes a reversible aldol reaction between acetaldehyde and D-glyceraldehyde 3-phosphate to generate 2-deoxy-D-ribose 5-phosphate. The chain is Deoxyribose-phosphate aldolase from Aeropyrum pernix (strain ATCC 700893 / DSM 11879 / JCM 9820 / NBRC 100138 / K1).